We begin with the raw amino-acid sequence, 275 residues long: Orotidine 5'-phosphate decarboxylase (275 aa).

Lysine 101 serves as the catalytic Proton donor.

This sequence belongs to the OMP decarboxylase family. Type 2 subfamily.

It catalyses the reaction orotidine 5'-phosphate + H(+) = UMP + CO2. The protein operates within pyrimidine metabolism; UMP biosynthesis via de novo pathway; UMP from orotate: step 2/2. The polypeptide is Orotidine 5'-phosphate decarboxylase (Leptospira interrogans serogroup Icterohaemorrhagiae serovar Lai (strain 56601)).